Here is a 74-residue protein sequence, read N- to C-terminus: uncharacterized protein (74 aa).

A run of 2 helical transmembrane segments spans residues 3–23 and 35–55; these read YSALIPLFILLISLVLFCFSF and ILFFAYCIDFLALILAVMLLT.

The protein resides in the cell membrane. This is an uncharacterized protein from Mycoplasma genitalium (strain ATCC 33530 / DSM 19775 / NCTC 10195 / G37) (Mycoplasmoides genitalium).